A 69-amino-acid polypeptide reads, in one-letter code: DNA gyrase inhibitor YacG (69 aa).

Residues cysteine 14, cysteine 17, cysteine 33, and cysteine 37 each coordinate Zn(2+). Positions 46-69 are disordered; sequence ADEEKSIPGAPDMSDSDGWSEDQY. A compositionally biased stretch (acidic residues) spans 59–69; it reads SDSDGWSEDQY.

This sequence belongs to the DNA gyrase inhibitor YacG family. In terms of assembly, interacts with GyrB. It depends on Zn(2+) as a cofactor.

In terms of biological role, inhibits all the catalytic activities of DNA gyrase by preventing its interaction with DNA. Acts by binding directly to the C-terminal domain of GyrB, which probably disrupts DNA binding by the gyrase. In Aliivibrio fischeri (strain MJ11) (Vibrio fischeri), this protein is DNA gyrase inhibitor YacG.